The primary structure comprises 176 residues: Viral interleukin-10 homolog (176 aa).

A signal peptide spans 1–25 (MLSVMVSSSLVLIVFFLGASEEAKP). Disulfide bonds link C38/C128 and C82/C133. N152 carries an N-linked (GlcNAc...) asparagine; by host glycan.

The protein belongs to the IL-10 family. Homodimer; disulfide-linked.

The protein localises to the secreted. In terms of biological role, functional viral IL-10 homolog. Can bind to the human IL-10 receptor and compete with human IL-10 for binding sites. Requires both subunits of the human IL-10 receptor complex to induce signal transduction events and biological activities. IL-10 signaling pathway has several immunosuppressive activities that are exploited by the virus. Inhibits TLR-induced type I interferon production in host plasmacytoid dendritic cells. The chain is Viral interleukin-10 homolog (UL111A) from Homo sapiens (Human).